A 464-amino-acid chain; its full sequence is Opioid growth factor receptor-like protein 1 (464 aa).

2 disordered regions span residues 1–91 (MGNL…AKPK) and 309–464 (ENFI…TSSG). The span at 43–59 (QQHDEPEQPKQPPERAG) shows a compositional bias: basic and acidic residues. Over residues 74 to 86 (AAGAEQGGESTEG) the composition is skewed to low complexity. The span at 316–325 (PKKELPERSK) shows a compositional bias: basic and acidic residues. Polar residues predominate over residues 327–342 (QKTPTLPASGSNGQTS). Composition is skewed to basic and acidic residues over residues 363–382 (SVEEKKGASREPGEEADKPS), 390–400 (PKPRNTEKDSA), and 425–439 (SEKDGEGEDQSKDSE). The segment covering 452-464 (AQQNATNPQTSSG) has biased composition (polar residues).

The protein belongs to the opioid growth factor receptor family.

The polypeptide is Opioid growth factor receptor-like protein 1 (Ogfrl1) (Mus musculus (Mouse)).